The primary structure comprises 85 residues: MDPKKIARINELAKKKKTVGLTGPEKVEQAKLREEYIEGYRRSVRHHIEGIKLVDEEGNDVTPEKLRQVQREKGLHGRSLDDPKS.

The tract at residues 62 to 85 (TPEKLRQVQREKGLHGRSLDDPKS) is disordered.

Belongs to the UPF0291 family.

Its subcellular location is the cytoplasm. This chain is UPF0291 protein SpyM3_1470, found in Streptococcus pyogenes serotype M3 (strain ATCC BAA-595 / MGAS315).